A 190-amino-acid chain; its full sequence is Small ribosomal subunit protein uS5 (190 aa).

The region spanning Phe-22–Val-85 is the S5 DRBM domain.

It belongs to the universal ribosomal protein uS5 family. Part of the 30S ribosomal subunit. Contacts proteins S4 and S8.

In terms of biological role, with S4 and S12 plays an important role in translational accuracy. Located at the back of the 30S subunit body where it stabilizes the conformation of the head with respect to the body. This is Small ribosomal subunit protein uS5 from Rhodopseudomonas palustris (strain BisB18).